The chain runs to 684 residues: Collagen alpha-3(IX) chain (684 aa).

The first 25 residues, 1–25 (MAGPRACAPLLLLLLLGELLAAAGA), serve as a signal peptide directing secretion. 2 disordered regions span residues 26-521 (QRVG…KEAS) and 548-665 (LAPG…CDTS). The interval 29–519 (GLPGPPGPPG…TGKPGVPGKE (491 aa)) is triple-helical region 3 (COL3). Pro residues-rich tracts occupy residues 31–42 (PGPPGPPGPPGK) and 55–64 (PGLPGPPGPK). The span at 66 to 82 (APGKPGKPGEAGLPGLP) shows a compositional bias: low complexity. Gly residues predominate over residues 130-139 (GPPGGIGLRG). 2 stretches are compositionally biased toward pro residues: residues 140–161 (PPGP…PPGH) and 177–188 (ICPPGPPGPPGM). Basic and acidic residues predominate over residues 200–212 (EQGEVGKDGEKGD). The span at 221-237 (LPGSVGLQGPRGLRGLP) shows a compositional bias: low complexity. Basic and acidic residues-rich tracts occupy residues 264-282 (AGDR…KGDL) and 344-356 (SKGE…RAGE). A Cell attachment site motif is present at residues 423–425 (RGD). A glycan (N-linked (GlcNAc...) asparagine) is linked at N483. Residues 498–507 (LGLQGVPGVP) show a composition bias toward low complexity. The segment at 520–550 (ASEQRIRELCGGMISEQIAQLAAHLRKPLAP) is nonhelical region 3 (NC3). The triple-helical region 2 (COL2) stretch occupies residues 551–630 (GSIGRPGPAG…QGPQGVPGTS (80 aa)). Positions 558 to 568 (PAGPPGPPGPP) are enriched in pro residues. Residues 570–586 (SIGHPGARGPPGYRGPT) are compositionally biased toward low complexity. A Cell attachment site motif is present at residues 601-603 (RGD). Residues 617-628 (DQGPQGPQGVPG) show a composition bias toward low complexity. The interval 631–632 (KD) is nonhelical region 2 (NC2). Residues 633–661 (GQDGAPGEPGPPGDPGLPGAIGAQGTPGI) are triple-helical region 1 (COL1). The segment at 662–684 (CDTSACQGAVLGGVGEKSGSRSS) is nonhelical region 1 (NC1).

The protein belongs to the fibril-associated collagens with interrupted helices (FACIT) family. As to quaternary structure, heterotrimer of an alpha 1(IX), an alpha 2(IX) and an alpha 3(IX) chain. Covalently linked to the telopeptides of type II collagen by lysine-derived cross-links. In terms of processing, prolines at the third position of the tripeptide repeating unit (G-X-Y) are hydroxylated in some or all of the chains.

Its subcellular location is the secreted. It localises to the extracellular space. The protein resides in the extracellular matrix. Structural component of hyaline cartilage and vitreous of the eye. The sequence is that of Collagen alpha-3(IX) chain (COL9A3) from Homo sapiens (Human).